A 453-amino-acid polypeptide reads, in one-letter code: Ribosome biogenesis protein YTM1 (453 aa).

Residues 19–102 (VKVRFFTNEE…ETVIDLQYTR (84 aa)) are ubiquitin-like (UBL) domain. Positions 112 to 453 (SFTNEDWISS…KKIDIYREAN (342 aa)) are sufficient for interaction with ERB1 and association with 66S pre-ribosomes. WD repeat units lie at residues 128–166 (GHGA…ESQY), 168–206 (GHSG…VEEG), 218–257 (GHKG…MSAV), 292–332 (GHGQ…CVDT), 334–373 (STGF…STEQ), 380–420 (GHTN…AMYT), and 422–453 (GKGG…REAN).

It belongs to the WD repeat WDR12/YTM1 family. As to quaternary structure, component of the NOP7 complex, composed of ERB1, NOP7 and YTM1. The complex is held together by ERB1, which interacts with NOP7 via its N-terminal domain and with YTM1 via a high-affinity interaction between the seven-bladed beta-propeller domains of the 2 proteins. The NOP7 complex associates with the 66S pre-ribosome. Interacts (via UBL domain) with MDN1 (via VWFA/MIDAS domain).

The protein localises to the nucleus. It localises to the nucleolus. The protein resides in the nucleoplasm. Its function is as follows. Component of the NOP7 complex, which is required for maturation of the 25S and 5.8S ribosomal RNAs and formation of the 60S ribosome. This is Ribosome biogenesis protein YTM1 from Meyerozyma guilliermondii (strain ATCC 6260 / CBS 566 / DSM 6381 / JCM 1539 / NBRC 10279 / NRRL Y-324) (Yeast).